Reading from the N-terminus, the 231-residue chain is PIAGSMVLAAILLKLGGYGIIRMMQILPTTKTDMFLPFIVLALWGAILANLTCLQQTDLKSLIAYSSISHMGLVVAAIIIQTPWGLTGAMTLMIAHGFTSSALFCLANTTYERTHTRILILTRGFHNILPMTTTWWLLANLMNIATPPTLNFTSELLIMSTLFNWCPTTIILLGLSMLITASYSLHMFLSTQMGPTPLNNQTEPTHSREHLLMALHLIPLMMISMKPELII.

6 helical membrane passes run 1–21 (PIAG…YGII), 34–54 (MFLP…LTCL), 61–80 (SLIA…AIII), 84–106 (WGLT…LFCL), 128–148 (ILPM…ATPP), and 169–189 (TIIL…HMFL).

The protein belongs to the complex I subunit 4 family.

It localises to the mitochondrion membrane. The catalysed reaction is a ubiquinone + NADH + 5 H(+)(in) = a ubiquinol + NAD(+) + 4 H(+)(out). Functionally, core subunit of the mitochondrial membrane respiratory chain NADH dehydrogenase (Complex I) that is believed to belong to the minimal assembly required for catalysis. Complex I functions in the transfer of electrons from NADH to the respiratory chain. The immediate electron acceptor for the enzyme is believed to be ubiquinone. The chain is NADH-ubiquinone oxidoreductase chain 4 (MT-ND4) from Atropoides picadoi (Picado's pit viper).